Reading from the N-terminus, the 61-residue chain is Large ribosomal subunit protein eL24 (61 aa).

Residues C7, C10, C33, and C37 each contribute to the Zn(2+) site. The C4-type zinc-finger motif lies at 7 to 37 (CTYCGRSIEPGTGLMYVKNDGSVLWFCSSKC).

This sequence belongs to the eukaryotic ribosomal protein eL24 family. In terms of assembly, part of the 50S ribosomal subunit. Forms a cluster with proteins L3 and L14. Requires Zn(2+) as cofactor.

Functionally, binds to the 23S rRNA. This chain is Large ribosomal subunit protein eL24, found in Hyperthermus butylicus (strain DSM 5456 / JCM 9403 / PLM1-5).